The primary structure comprises 344 residues: Lipase chaperone (344 aa).

Residues 14 to 34 (AVVYGAVGLAAIAGVAMWSGA) traverse the membrane as a helical segment. The interval 37–78 (HGGTGASGEPPDASAARGPAAAPPQAAVPASTSLPPSLAGSS) is disordered. A compositionally biased stretch (low complexity) spans 43–78 (SGEPPDASAARGPAAAPPQAAVPASTSLPPSLAGSS).

The protein belongs to the lipase chaperone family.

The protein resides in the cell inner membrane. Functionally, may be involved in the folding of the extracellular lipase during its passage through the periplasm. This Burkholderia cepacia (Pseudomonas cepacia) protein is Lipase chaperone (lifO).